Reading from the N-terminus, the 382-residue chain is D-galactonate dehydratase (382 aa).

Mg(2+) is bound at residue Asp-183. His-185 (proton donor) is an active-site residue. Mg(2+)-binding residues include Glu-209 and Glu-235. His-285 serves as the catalytic Proton acceptor.

Belongs to the mandelate racemase/muconate lactonizing enzyme family. GalD subfamily. Requires Mg(2+) as cofactor.

The enzyme catalyses D-galactonate = 2-dehydro-3-deoxy-D-galactonate + H2O. It functions in the pathway carbohydrate acid metabolism; D-galactonate degradation; D-glyceraldehyde 3-phosphate and pyruvate from D-galactonate: step 1/3. In terms of biological role, catalyzes the dehydration of D-galactonate to 2-keto-3-deoxy-D-galactonate. The protein is D-galactonate dehydratase of Salmonella choleraesuis (strain SC-B67).